Here is a 222-residue protein sequence, read N- to C-terminus: Ribosomal RNA small subunit methyltransferase G (222 aa).

S-adenosyl-L-methionine-binding positions include G85, L90, 108-110 (DAT), 136-137 (VE), and R150.

It belongs to the methyltransferase superfamily. RNA methyltransferase RsmG family.

It is found in the cytoplasm. Its function is as follows. Specifically methylates the N7 position of a guanine in 16S rRNA. The protein is Ribosomal RNA small subunit methyltransferase G of Chlorobium phaeobacteroides (strain DSM 266 / SMG 266 / 2430).